A 185-amino-acid chain; its full sequence is Elongation factor P (185 aa).

Belongs to the elongation factor P family.

The protein resides in the cytoplasm. The protein operates within protein biosynthesis; polypeptide chain elongation. Functionally, involved in peptide bond synthesis. Stimulates efficient translation and peptide-bond synthesis on native or reconstituted 70S ribosomes in vitro. Probably functions indirectly by altering the affinity of the ribosome for aminoacyl-tRNA, thus increasing their reactivity as acceptors for peptidyl transferase. The chain is Elongation factor P from Limosilactobacillus fermentum (strain NBRC 3956 / LMG 18251) (Lactobacillus fermentum).